Reading from the N-terminus, the 833-residue chain is Copper-exporting P-type ATPase (833 aa).

HMA domains follow at residues 3-64 and 98-161; these read QTID…YGAT and ESQQ…YGAE. The Cu(+) site is built by C14, C17, C109, and C112. The next 6 helical transmembrane spans lie at 186-206, 217-237, 253-273, 283-303, 437-457, and 463-483; these read WQAI…MIGD, LWLA…GHFY, TLVA…NLWP, LYYE…MLEA, AVFV…WYFF, and IVYT…CALG. The active-site 4-aspartylphosphate intermediate is the D522. 2 residues coordinate Mg(2+): D719 and D723. The next 2 helical transmembrane spans lie at 778 to 798 and 800 to 820; these read LGAF…LWPF and GTLL…ITVV.

Belongs to the cation transport ATPase (P-type) (TC 3.A.3) family. Type IB subfamily.

The protein localises to the cell inner membrane. It is found in the cytoplasm. The enzyme catalyses Cu(+)(in) + ATP + H2O = Cu(+)(out) + ADP + phosphate + H(+). In terms of biological role, involved in Cu(+) export. Essential for copper tolerance under both aerobic and anaerobic conditions. Probably also encodes a cytoplasmic copper chaperone CopA(Z) that is produced by programmed ribosomal frameshifting. The sequence is that of Copper-exporting P-type ATPase (copA) from Salmonella typhimurium (strain LT2 / SGSC1412 / ATCC 700720).